A 73-amino-acid chain; its full sequence is Conotoxin ArMKLT2-022 (73 aa).

The first 22 residues, Met-1–Gly-22, serve as a signal peptide directing secretion. The propeptide occupies Glu-23–Arg-40. Gln-41 bears the Pyrrolidone carboxylic acid mark. 3 disulfide bridges follow: Cys-42–Cys-56, Cys-49–Cys-60, and Cys-55–Cys-67.

It belongs to the conotoxin O1 superfamily. As to expression, expressed by the venom duct.

The protein resides in the secreted. This is Conotoxin ArMKLT2-022 from Conus arenatus (Sand-dusted cone).